The sequence spans 160 residues: Ribosomal RNA large subunit methyltransferase H (160 aa).

Residues Leu76, Gly108, and 127–132 contribute to the S-adenosyl-L-methionine site; that span reads FGALTW.

Belongs to the RNA methyltransferase RlmH family. Homodimer.

It localises to the cytoplasm. The catalysed reaction is pseudouridine(1915) in 23S rRNA + S-adenosyl-L-methionine = N(3)-methylpseudouridine(1915) in 23S rRNA + S-adenosyl-L-homocysteine + H(+). Specifically methylates the pseudouridine at position 1915 (m3Psi1915) in 23S rRNA. The sequence is that of Ribosomal RNA large subunit methyltransferase H from Mesorhizobium japonicum (strain LMG 29417 / CECT 9101 / MAFF 303099) (Mesorhizobium loti (strain MAFF 303099)).